A 116-amino-acid polypeptide reads, in one-letter code: NADH-ubiquinone oxidoreductase chain 3 (116 aa).

Transmembrane regions (helical) follow at residues 3 to 23, 56 to 76, and 87 to 107; these read LISTVILIASALSLILILVSF, FFLIAILFLLFDLEIALLLPL, and LTFMWATSVLALLTLGLIYEW.

It belongs to the complex I subunit 3 family.

Its subcellular location is the mitochondrion membrane. The enzyme catalyses a ubiquinone + NADH + 5 H(+)(in) = a ubiquinol + NAD(+) + 4 H(+)(out). Core subunit of the mitochondrial membrane respiratory chain NADH dehydrogenase (Complex I) that is believed to belong to the minimal assembly required for catalysis. Complex I functions in the transfer of electrons from NADH to the respiratory chain. The immediate electron acceptor for the enzyme is believed to be ubiquinone. The polypeptide is NADH-ubiquinone oxidoreductase chain 3 (MT-ND3) (Gadus morhua (Atlantic cod)).